Reading from the N-terminus, the 243-residue chain is Phosphoribosyl isomerase A (243 aa).

Asp9 (proton acceptor) is an active-site residue. Asp128 (proton donor) is an active-site residue.

This sequence belongs to the HisA/HisF family.

The protein resides in the cytoplasm. The enzyme catalyses 1-(5-phospho-beta-D-ribosyl)-5-[(5-phospho-beta-D-ribosylamino)methylideneamino]imidazole-4-carboxamide = 5-[(5-phospho-1-deoxy-D-ribulos-1-ylimino)methylamino]-1-(5-phospho-beta-D-ribosyl)imidazole-4-carboxamide. It carries out the reaction N-(5-phospho-beta-D-ribosyl)anthranilate = 1-(2-carboxyphenylamino)-1-deoxy-D-ribulose 5-phosphate. It participates in amino-acid biosynthesis; L-histidine biosynthesis; L-histidine from 5-phospho-alpha-D-ribose 1-diphosphate: step 4/9. It functions in the pathway amino-acid biosynthesis; L-tryptophan biosynthesis; L-tryptophan from chorismate: step 3/5. Functionally, involved in both the histidine and tryptophan biosynthetic pathways. This is Phosphoribosyl isomerase A from Mycolicibacterium paratuberculosis (strain ATCC BAA-968 / K-10) (Mycobacterium paratuberculosis).